Consider the following 306-residue polypeptide: Ribonuclease Z (306 aa).

Residues His-63, His-65, Asp-67, His-68, His-140, Asp-211, and His-269 each coordinate Zn(2+). Catalysis depends on Asp-67, which acts as the Proton acceptor.

This sequence belongs to the RNase Z family. As to quaternary structure, homodimer. The cofactor is Zn(2+).

It carries out the reaction Endonucleolytic cleavage of RNA, removing extra 3' nucleotides from tRNA precursor, generating 3' termini of tRNAs. A 3'-hydroxy group is left at the tRNA terminus and a 5'-phosphoryl group is left at the trailer molecule.. Zinc phosphodiesterase, which displays some tRNA 3'-processing endonuclease activity. Probably involved in tRNA maturation, by removing a 3'-trailer from precursor tRNA. The polypeptide is Ribonuclease Z (Listeria monocytogenes serotype 4b (strain CLIP80459)).